Here is a 153-residue protein sequence, read N- to C-terminus: SsrA-binding protein (153 aa).

The disordered stretch occupies residues 132–153 (REKDWLRERERVMKHDTRRRSD).

It belongs to the SmpB family.

The protein resides in the cytoplasm. Required for rescue of stalled ribosomes mediated by trans-translation. Binds to transfer-messenger RNA (tmRNA), required for stable association of tmRNA with ribosomes. tmRNA and SmpB together mimic tRNA shape, replacing the anticodon stem-loop with SmpB. tmRNA is encoded by the ssrA gene; the 2 termini fold to resemble tRNA(Ala) and it encodes a 'tag peptide', a short internal open reading frame. During trans-translation Ala-aminoacylated tmRNA acts like a tRNA, entering the A-site of stalled ribosomes, displacing the stalled mRNA. The ribosome then switches to translate the ORF on the tmRNA; the nascent peptide is terminated with the 'tag peptide' encoded by the tmRNA and targeted for degradation. The ribosome is freed to recommence translation, which seems to be the essential function of trans-translation. In Bordetella avium (strain 197N), this protein is SsrA-binding protein.